The sequence spans 716 residues: Polyribonucleotide nucleotidyltransferase (716 aa).

Mg(2+)-binding residues include Asp-488 and Asp-494. Positions 555–614 constitute a KH domain; sequence PKIETITIPTDKIREVIGTGGKVIREIVATTGAKVDINDEGTVKVSASDGAKIKAAIDWI. The S1 motif domain occupies 624-692; it reads GAIYDGKVVK…DRGKTKLSMK (69 aa). Residues 695–716 form a disordered region; that stretch reads DQETGEDLSKKEAVSPEEAVNT.

It belongs to the polyribonucleotide nucleotidyltransferase family. It depends on Mg(2+) as a cofactor.

The protein localises to the cytoplasm. It catalyses the reaction RNA(n+1) + phosphate = RNA(n) + a ribonucleoside 5'-diphosphate. Functionally, involved in mRNA degradation. Catalyzes the phosphorolysis of single-stranded polyribonucleotides processively in the 3'- to 5'-direction. In Caulobacter sp. (strain K31), this protein is Polyribonucleotide nucleotidyltransferase.